The following is a 243-amino-acid chain: GTP cyclohydrolase 1 type 2 (243 aa).

Positions 63, 64, 102, 209, and 213 each coordinate a divalent metal cation.

This sequence belongs to the GTP cyclohydrolase I type 2/NIF3 family. As to quaternary structure, homohexamer.

The catalysed reaction is GTP + H2O = 7,8-dihydroneopterin 3'-triphosphate + formate + H(+). The protein operates within cofactor biosynthesis; 7,8-dihydroneopterin triphosphate biosynthesis; 7,8-dihydroneopterin triphosphate from GTP: step 1/1. In terms of biological role, converts GTP to dihydroneopterin triphosphate. Is not active with GDP, GMP, ATP, CTP or UTP as substrate. The protein is GTP cyclohydrolase 1 type 2 of Helicobacter pylori (strain ATCC 700392 / 26695) (Campylobacter pylori).